A 472-amino-acid polypeptide reads, in one-letter code: ATP synthase subunit beta (472 aa).

157 to 164 provides a ligand contact to ATP; the sequence is GGAGVGKT.

It belongs to the ATPase alpha/beta chains family. In terms of assembly, F-type ATPases have 2 components, CF(1) - the catalytic core - and CF(0) - the membrane proton channel. CF(1) has five subunits: alpha(3), beta(3), gamma(1), delta(1), epsilon(1). CF(0) has three main subunits: a(1), b(2) and c(9-12). The alpha and beta chains form an alternating ring which encloses part of the gamma chain. CF(1) is attached to CF(0) by a central stalk formed by the gamma and epsilon chains, while a peripheral stalk is formed by the delta and b chains.

It localises to the cell membrane. The enzyme catalyses ATP + H2O + 4 H(+)(in) = ADP + phosphate + 5 H(+)(out). Functionally, produces ATP from ADP in the presence of a proton gradient across the membrane. The catalytic sites are hosted primarily by the beta subunits. This Desulforudis audaxviator (strain MP104C) protein is ATP synthase subunit beta.